Consider the following 106-residue polypeptide: Iron-sulfur cluster assembly protein CyaY (106 aa).

The protein belongs to the frataxin family.

Functionally, involved in iron-sulfur (Fe-S) cluster assembly. May act as a regulator of Fe-S biogenesis. The sequence is that of Iron-sulfur cluster assembly protein CyaY from Yersinia pseudotuberculosis serotype O:3 (strain YPIII).